The following is a 399-amino-acid chain: Nitric oxide reductase (399 aa).

The segment at 32-221 (HRGTTYNAYL…DEIQKINLAI (190 aa)) is zinc metallo-hydrolase. Fe cation contacts are provided by H81, E83, D85, H148, D167, and H228. The region spanning 255 to 394 (AVIAYDTMWL…RCYELGRKIA (140 aa)) is the Flavodoxin-like domain.

The protein in the N-terminal section; belongs to the zinc metallo-hydrolase group 3 family. As to quaternary structure, homodimer. FMN serves as cofactor. The cofactor is Fe cation.

Has nitric oxide reductase activity in combination with Hrb; probably involved in nitrosative stress protection. The protein is Nitric oxide reductase (fprA) of Moorella thermoacetica (strain ATCC 39073 / JCM 9320).